The chain runs to 307 residues: Putative S-adenosyl-L-methionine-dependent methyltransferase MUL_4430 (307 aa).

S-adenosyl-L-methionine contacts are provided by residues Asp-128 and 157-158; that span reads DL.

It belongs to the UPF0677 family.

Exhibits S-adenosyl-L-methionine-dependent methyltransferase activity. This chain is Putative S-adenosyl-L-methionine-dependent methyltransferase MUL_4430, found in Mycobacterium ulcerans (strain Agy99).